Here is a 280-residue protein sequence, read N- to C-terminus: Antiactivator FleN (280 aa).

Residues 19-26 (KGGVGKTN), glutamate 153, asparagine 181, 215-217 (PYD), and arginine 221 contribute to the ATP site.

It belongs to the ParA family. As to quaternary structure, forms homodimers. Interacts with FleQ.

With respect to regulation, ATP-binding allows dimerization and subsequent antagonistic effect against FleQ. ATPase that plays an important role in maintaining flagellar number in Pseudomonas aeruginosa. Exhibits anti-activator activity against FleQ, the global transcriptional regulator of flagellar genes. In Pseudomonas aeruginosa (strain ATCC 15692 / DSM 22644 / CIP 104116 / JCM 14847 / LMG 12228 / 1C / PRS 101 / PAO1), this protein is Antiactivator FleN.